Reading from the N-terminus, the 1047-residue chain is Isoleucine--tRNA ligase (1047 aa).

The 'HIGH' region signature appears at 52–62; sequence PTANGMPGAHH. A 'KMSKS' region motif is present at residues 600–604; it reads KMSKH. Position 603 (Lys-603) interacts with ATP.

Belongs to the class-I aminoacyl-tRNA synthetase family. IleS type 2 subfamily. As to quaternary structure, monomer. Zn(2+) serves as cofactor.

The protein resides in the cytoplasm. It carries out the reaction tRNA(Ile) + L-isoleucine + ATP = L-isoleucyl-tRNA(Ile) + AMP + diphosphate. Functionally, catalyzes the attachment of isoleucine to tRNA(Ile). As IleRS can inadvertently accommodate and process structurally similar amino acids such as valine, to avoid such errors it has two additional distinct tRNA(Ile)-dependent editing activities. One activity is designated as 'pretransfer' editing and involves the hydrolysis of activated Val-AMP. The other activity is designated 'posttransfer' editing and involves deacylation of mischarged Val-tRNA(Ile). This chain is Isoleucine--tRNA ligase, found in Streptomyces coelicolor (strain ATCC BAA-471 / A3(2) / M145).